A 147-amino-acid polypeptide reads, in one-letter code: Cysteine proteinase inhibitor 2 (147 aa).

The N-terminal stretch at 1-27 (MATMLKVSLVLSLLGFLVIAVVTPSAA) is a signal peptide. The 31-residue stretch at 87–117 (LQFSRVVSAQKQVVAGLKYYLRIEVTQPNGS) folds into the Cystatin domain. The Secondary area of contact motif lies at 98–102 (QVVAG). N-linked (GlcNAc...) asparagine glycosylation is present at Asn115.

Belongs to the cystatin family. Phytocystatin subfamily.

Its subcellular location is the secreted. Its function is as follows. Specific inhibitor of cysteine proteinases. Probably involved in the regulation of endogenous processes and in defense against pests and pathogens. This Arabidopsis thaliana (Mouse-ear cress) protein is Cysteine proteinase inhibitor 2 (CYS2).